A 400-amino-acid polypeptide reads, in one-letter code: Probable vacuolar protease A (400 aa).

The signal sequence occupies residues 1 to 18 (MKGSLLLAGATLLGCTSA). A propeptide spans 19–72 (KLHSLKLKKVSLKEQLEHADIDVQIKSLGQKYMGIRPEQHEQQMFKEQTPIEAE) (activation peptide). A Peptidase A1 domain is found at 87–397 (YFSEISIGTP…DLGKGTVGLA (311 aa)). The active site involves Asp-105. Residues Cys-118 and Cys-123 are joined by a disulfide bond. An N-linked (GlcNAc...) asparagine glycan is attached at Asn-140. The active site involves Asp-289. Residues Cys-323 and Cys-356 are joined by a disulfide bond. N-linked (GlcNAc...) asparagine glycosylation occurs at Asn-340.

The protein belongs to the peptidase A1 family.

It localises to the vacuole lumen. The protein localises to the secreted. It carries out the reaction Hydrolysis of proteins with broad specificity for peptide bonds. Cleaves -Leu-Leu-|-Val-Tyr- bond in a synthetic substrate. Does not act on esters of Tyr or Arg.. Vacuolar aspartic endopeptidase which is probably also secreted and contributes to virulence. This Trichophyton verrucosum (strain HKI 0517) protein is Probable vacuolar protease A (PEP2).